A 179-amino-acid chain; its full sequence is Putative 5'(3')-deoxyribonucleotidase (179 aa).

The active-site Nucleophile is Asp-9. Positions 9, 11, and 135 each coordinate Mg(2+). Residue Asp-11 is the Proton donor of the active site.

Belongs to the 5'(3')-deoxyribonucleotidase family. Mg(2+) serves as cofactor.

Functionally, dephosphorylates the 5' and 2'(3')-phosphates of deoxyribonucleotides. In Staphylococcus epidermidis (strain ATCC 35984 / DSM 28319 / BCRC 17069 / CCUG 31568 / BM 3577 / RP62A), this protein is Putative 5'(3')-deoxyribonucleotidase.